A 417-amino-acid chain; its full sequence is Serine hydroxymethyltransferase (417 aa).

(6S)-5,6,7,8-tetrahydrofolate contacts are provided by residues Leu112 and 116–118; that span reads GHL. Lys221 bears the N6-(pyridoxal phosphate)lysine mark. Glu247 is a binding site for (6S)-5,6,7,8-tetrahydrofolate.

The protein belongs to the SHMT family. Homodimer. Pyridoxal 5'-phosphate is required as a cofactor.

Its subcellular location is the cytoplasm. It carries out the reaction (6R)-5,10-methylene-5,6,7,8-tetrahydrofolate + glycine + H2O = (6S)-5,6,7,8-tetrahydrofolate + L-serine. It participates in one-carbon metabolism; tetrahydrofolate interconversion. It functions in the pathway amino-acid biosynthesis; glycine biosynthesis; glycine from L-serine: step 1/1. Catalyzes the reversible interconversion of serine and glycine with tetrahydrofolate (THF) serving as the one-carbon carrier. This reaction serves as the major source of one-carbon groups required for the biosynthesis of purines, thymidylate, methionine, and other important biomolecules. Also exhibits THF-independent aldolase activity toward beta-hydroxyamino acids, producing glycine and aldehydes, via a retro-aldol mechanism. This Borreliella afzelii (strain PKo) (Borrelia afzelii) protein is Serine hydroxymethyltransferase.